The chain runs to 259 residues: Thiazole synthase (259 aa).

K95 functions as the Schiff-base intermediate with DXP in the catalytic mechanism. 1-deoxy-D-xylulose 5-phosphate contacts are provided by residues G156, 182 to 183 (AG), and 204 to 205 (NT).

The protein belongs to the ThiG family. Homotetramer. Forms heterodimers with either ThiH or ThiS.

Its subcellular location is the cytoplasm. The catalysed reaction is [ThiS sulfur-carrier protein]-C-terminal-Gly-aminoethanethioate + 2-iminoacetate + 1-deoxy-D-xylulose 5-phosphate = [ThiS sulfur-carrier protein]-C-terminal Gly-Gly + 2-[(2R,5Z)-2-carboxy-4-methylthiazol-5(2H)-ylidene]ethyl phosphate + 2 H2O + H(+). The protein operates within cofactor biosynthesis; thiamine diphosphate biosynthesis. Functionally, catalyzes the rearrangement of 1-deoxy-D-xylulose 5-phosphate (DXP) to produce the thiazole phosphate moiety of thiamine. Sulfur is provided by the thiocarboxylate moiety of the carrier protein ThiS. In vitro, sulfur can be provided by H(2)S. The sequence is that of Thiazole synthase from Baumannia cicadellinicola subsp. Homalodisca coagulata.